Here is a 331-residue protein sequence, read N- to C-terminus: Adenosine deaminase (331 aa).

Zn(2+) contacts are provided by histidine 12 and histidine 14. 3 residues coordinate substrate: histidine 14, aspartate 16, and glycine 170. Histidine 197 serves as a coordination point for Zn(2+). Residue glutamate 200 is the Proton donor of the active site. Aspartate 278 is a Zn(2+) binding site.

The protein belongs to the metallo-dependent hydrolases superfamily. Adenosine and AMP deaminases family. Adenosine deaminase subfamily. Requires Zn(2+) as cofactor.

The catalysed reaction is adenosine + H2O + H(+) = inosine + NH4(+). It carries out the reaction 2'-deoxyadenosine + H2O + H(+) = 2'-deoxyinosine + NH4(+). Catalyzes the hydrolytic deamination of adenosine and 2-deoxyadenosine. The chain is Adenosine deaminase from Clostridium botulinum (strain 657 / Type Ba4).